The chain runs to 183 residues: Guanylate kinase (183 aa).

The region spanning 4 to 182 is the Guanylate kinase-like domain; it reads GRVVVLTGPS…AITALEAAIF (179 aa). Residue 11–18 coordinates ATP; that stretch reads GPSGVGKG.

The protein belongs to the guanylate kinase family.

The protein localises to the cytoplasm. It carries out the reaction GMP + ATP = GDP + ADP. It catalyses the reaction dZMP + ATP = dZDP + ADP. It participates in purine metabolism. Essential for recycling GMP and indirectly, cGMP. Its function is as follows. (Microbial infection) Catalyzes the phosphorylation of dZMP to dZDP, when the bacterium is infected by a phage that produces the substrate for the synthesis of dZTP (2- amino-2'-deoxyadenosine 5'-triphosphate), which is then used by the phage as a DNA polymerase substrate. The chain is Guanylate kinase from Synechococcus elongatus (strain ATCC 33912 / PCC 7942 / FACHB-805) (Anacystis nidulans R2).